The primary structure comprises 310 residues: Porphobilinogen deaminase (310 aa).

S-(dipyrrolylmethanemethyl)cysteine is present on Cys-242.

The protein belongs to the HMBS family. In terms of assembly, monomer. It depends on dipyrromethane as a cofactor.

It catalyses the reaction 4 porphobilinogen + H2O = hydroxymethylbilane + 4 NH4(+). The protein operates within porphyrin-containing compound metabolism; protoporphyrin-IX biosynthesis; coproporphyrinogen-III from 5-aminolevulinate: step 2/4. Functionally, tetrapolymerization of the monopyrrole PBG into the hydroxymethylbilane pre-uroporphyrinogen in several discrete steps. The protein is Porphobilinogen deaminase of Shewanella sp. (strain W3-18-1).